We begin with the raw amino-acid sequence, 941 residues long: Cell wall protein IFF3 (941 aa).

The first 20 residues, 1–20 (MQLFQNILVSIALLTQVVFA), serve as a signal peptide directing secretion. Residues Asn-36, Asn-367, Asn-686, Asn-732, Asn-790, Asn-818, Asn-825, Asn-884, and Asn-917 are each glycosylated (N-linked (GlcNAc...) asparagine). Asn-917 carries the GPI-anchor amidated asparagine lipid modification. Positions 918-941 (GSNKESIENIKYLTLVVFGLMMFM) are cleaved as a propeptide — removed in mature form.

It belongs to the HYR1/IFF family. In terms of processing, the GPI-anchor is attached to the protein in the endoplasmic reticulum and serves to target the protein to the cell surface. There, the glucosamine-inositol phospholipid moiety is cleaved off and the GPI-modified mannoprotein is covalently attached via its lipidless GPI glycan remnant to the 1,6-beta-glucan of the outer cell wall layer.

It is found in the secreted. The protein localises to the cell wall. Its subcellular location is the membrane. Functionally, GPI-anchored cell wall protein involved in cell wall organization, hyphal growth, as well as in host-fungal interaction and virulence. In Candida albicans (strain SC5314 / ATCC MYA-2876) (Yeast), this protein is Cell wall protein IFF3 (IFF3).